Reading from the N-terminus, the 1186-residue chain is Trafficking protein particle complex II-specific subunit 120 homolog (1186 aa).

Disordered stretches follow at residues 777-824 and 964-984; these read PTDS…EKES and TKDP…SEKN. A compositionally biased stretch (polar residues) spans 779 to 792; that stretch reads DSDNTMSSGRNAAG. Ser971 bears the Phosphoserine mark. The segment covering 972 to 981 has biased composition (low complexity); it reads PSSSRNPSFS.

The protein belongs to the TRS120 family. Part of the multisubunit TRAPP (transport protein particle) II complex composed of BET3, BET5, TRS20, TRS23, TRS31, TRS33, TRS65, TRS85, TRS120 and TRS130. Expressed in roots, leaves, stems and flowers.

The protein resides in the golgi apparatus. Its subcellular location is the trans-Golgi network. It is found in the early endosome. Its function is as follows. Specific subunit of the TRAPP II complex, a highly conserved vesicle tethering complex that is required for the proper transport of proteins in post-Golgi trafficking pathways to the growing cell plate in mitotic active cells. Required for the polarized and selective transport of PIN2 and probably PIN1 to the plasma membrane. Not required for ER-to-Golgi as well as biosynthetic and endocytic vacuolar transport. The chain is Trafficking protein particle complex II-specific subunit 120 homolog from Arabidopsis thaliana (Mouse-ear cress).